We begin with the raw amino-acid sequence, 279 residues long: 3-methyl-2-oxobutanoate hydroxymethyltransferase (279 aa).

Mg(2+) contacts are provided by Asp44 and Asp83. Residues 44 to 45 (DS), Asp83, and Lys112 contribute to the 3-methyl-2-oxobutanoate site. Glu114 provides a ligand contact to Mg(2+). The active-site Proton acceptor is the Glu180.

The protein belongs to the PanB family. In terms of assembly, homodecamer; pentamer of dimers. Mg(2+) is required as a cofactor.

It localises to the cytoplasm. It carries out the reaction 3-methyl-2-oxobutanoate + (6R)-5,10-methylene-5,6,7,8-tetrahydrofolate + H2O = 2-dehydropantoate + (6S)-5,6,7,8-tetrahydrofolate. The protein operates within cofactor biosynthesis; (R)-pantothenate biosynthesis; (R)-pantoate from 3-methyl-2-oxobutanoate: step 1/2. In terms of biological role, catalyzes the reversible reaction in which hydroxymethyl group from 5,10-methylenetetrahydrofolate is transferred onto alpha-ketoisovalerate to form ketopantoate. The sequence is that of 3-methyl-2-oxobutanoate hydroxymethyltransferase from Chloroflexus aggregans (strain MD-66 / DSM 9485).